The primary structure comprises 389 residues: MEARILQSSSSCYSSLYAVNRSRFSSVSSPKPFSVSFAQTTRTRTRVLSMSKKDGRTDKDDDTDSLNYKDSGVDIDAGAELVKRIAKMAPGIGGFGGLFPLGDSYLVAGTDGVGTKLKLAFETGIHDTIGIDLVAMSVNDIITSGAKPLFFLDYFATSRLDVDLAEKVIKGIVEGCRQSECALLGGETAEMPDFYAEGEYDLSGFAVGIVKKTSVINGKNIVAGDVLIGLPSSGVHSNGFSLVRRVLARSNLSLKDALPGGSSTLGDALMAPTVIYVKQVLDMIEKGGVKGLAHITGGGFTDNIPRVFPDGLGAVIHTDAWELPPLFKWIQQTGRIEDSEMRRTFNLGIGMVMVVSPEAASRILEEVKNGDYVAYRVGEVVNGEGVSYQ.

The transit peptide at 1–58 directs the protein to the chloroplast; that stretch reads MEARILQSSSSCYSSLYAVNRSRFSSVSSPKPFSVSFAQTTRTRTRVLSMSKKDGRTD. The disordered stretch occupies residues 46–65; the sequence is RVLSMSKKDGRTDKDDDTDS.

This sequence belongs to the AIR synthase family.

It is found in the plastid. The protein resides in the chloroplast. The enzyme catalyses 2-formamido-N(1)-(5-O-phospho-beta-D-ribosyl)acetamidine + ATP = 5-amino-1-(5-phospho-beta-D-ribosyl)imidazole + ADP + phosphate + H(+). The protein operates within purine metabolism; IMP biosynthesis via de novo pathway; 5-amino-1-(5-phospho-D-ribosyl)imidazole from N(2)-formyl-N(1)-(5-phospho-D-ribosyl)glycinamide: step 2/2. This chain is Phosphoribosylformylglycinamidine cyclo-ligase, chloroplastic (PUR5), found in Arabidopsis thaliana (Mouse-ear cress).